A 295-amino-acid polypeptide reads, in one-letter code: Shikimate dehydrogenase (NADP(+)) (295 aa).

Shikimate contacts are provided by residues 22–24 (SLS) and Ser69. Residue Lys73 is the Proton acceptor of the active site. Positions 94 and 111 each coordinate shikimate. NADP(+) is bound by residues 135–139 (GAGGA) and Val236. Tyr238 contributes to the shikimate binding site. Residue Gly260 coordinates NADP(+).

The protein belongs to the shikimate dehydrogenase family. In terms of assembly, homodimer.

It catalyses the reaction shikimate + NADP(+) = 3-dehydroshikimate + NADPH + H(+). It functions in the pathway metabolic intermediate biosynthesis; chorismate biosynthesis; chorismate from D-erythrose 4-phosphate and phosphoenolpyruvate: step 4/7. Functionally, involved in the biosynthesis of the chorismate, which leads to the biosynthesis of aromatic amino acids. Catalyzes the reversible NADPH linked reduction of 3-dehydroshikimate (DHSA) to yield shikimate (SA). This chain is Shikimate dehydrogenase (NADP(+)), found in Streptococcus uberis (strain ATCC BAA-854 / 0140J).